The chain runs to 480 residues: Protein nucleotidyltransferase YdiU (480 aa).

G86, G88, R89, K109, D121, G122, R172, and R179 together coordinate ATP. Residue D248 is the Proton acceptor of the active site. Mg(2+)-binding residues include N249 and D258. D258 lines the ATP pocket.

Belongs to the SELO family. It depends on Mg(2+) as a cofactor. Mn(2+) serves as cofactor.

The catalysed reaction is L-seryl-[protein] + ATP = 3-O-(5'-adenylyl)-L-seryl-[protein] + diphosphate. The enzyme catalyses L-threonyl-[protein] + ATP = 3-O-(5'-adenylyl)-L-threonyl-[protein] + diphosphate. It catalyses the reaction L-tyrosyl-[protein] + ATP = O-(5'-adenylyl)-L-tyrosyl-[protein] + diphosphate. It carries out the reaction L-histidyl-[protein] + UTP = N(tele)-(5'-uridylyl)-L-histidyl-[protein] + diphosphate. The catalysed reaction is L-seryl-[protein] + UTP = O-(5'-uridylyl)-L-seryl-[protein] + diphosphate. The enzyme catalyses L-tyrosyl-[protein] + UTP = O-(5'-uridylyl)-L-tyrosyl-[protein] + diphosphate. Functionally, nucleotidyltransferase involved in the post-translational modification of proteins. It can catalyze the addition of adenosine monophosphate (AMP) or uridine monophosphate (UMP) to a protein, resulting in modifications known as AMPylation and UMPylation. This Salmonella newport (strain SL254) protein is Protein nucleotidyltransferase YdiU.